The primary structure comprises 341 residues: Methionine import ATP-binding protein MetN (341 aa).

Positions 2 to 241 (IELNQVVKRY…PQHEVTRRFV (240 aa)) constitute an ABC transporter domain. 38–45 (GFSGAGKS) provides a ligand contact to ATP.

This sequence belongs to the ABC transporter superfamily. Methionine importer (TC 3.A.1.24) family. The complex is composed of two ATP-binding proteins (MetN), two transmembrane proteins (MetI) and a solute-binding protein (MetQ).

Its subcellular location is the cell membrane. The catalysed reaction is L-methionine(out) + ATP + H2O = L-methionine(in) + ADP + phosphate + H(+). It carries out the reaction D-methionine(out) + ATP + H2O = D-methionine(in) + ADP + phosphate + H(+). Part of the ABC transporter complex MetNIQ involved in methionine import. Responsible for energy coupling to the transport system. This is Methionine import ATP-binding protein MetN from Staphylococcus haemolyticus (strain JCSC1435).